The primary structure comprises 470 residues: ATP synthase subunit beta (470 aa).

Position 155-162 (155-162) interacts with ATP; the sequence is GGAGVGKT.

It belongs to the ATPase alpha/beta chains family. As to quaternary structure, F-type ATPases have 2 components, CF(1) - the catalytic core - and CF(0) - the membrane proton channel. CF(1) has five subunits: alpha(3), beta(3), gamma(1), delta(1), epsilon(1). CF(0) has three main subunits: a(1), b(2) and c(9-12). The alpha and beta chains form an alternating ring which encloses part of the gamma chain. CF(1) is attached to CF(0) by a central stalk formed by the gamma and epsilon chains, while a peripheral stalk is formed by the delta and b chains.

Its subcellular location is the cell membrane. The enzyme catalyses ATP + H2O + 4 H(+)(in) = ADP + phosphate + 5 H(+)(out). Functionally, produces ATP from ADP in the presence of a proton gradient across the membrane. The catalytic sites are hosted primarily by the beta subunits. In Lacticaseibacillus casei (Lactobacillus casei), this protein is ATP synthase subunit beta.